Consider the following 460-residue polypeptide: Cysteine--tRNA ligase (460 aa).

Cysteine 28 lines the Zn(2+) pocket. The short motif at 30 to 40 (VTIYDLCHIGH) is the 'HIGH' region element. 3 residues coordinate Zn(2+): cysteine 209, histidine 234, and glutamate 238. The 'KMSKS' region motif lies at 266–270 (KMSKS). Position 269 (lysine 269) interacts with ATP.

The protein belongs to the class-I aminoacyl-tRNA synthetase family. As to quaternary structure, monomer. It depends on Zn(2+) as a cofactor.

Its subcellular location is the cytoplasm. The catalysed reaction is tRNA(Cys) + L-cysteine + ATP = L-cysteinyl-tRNA(Cys) + AMP + diphosphate. The protein is Cysteine--tRNA ligase of Vibrio parahaemolyticus serotype O3:K6 (strain RIMD 2210633).